We begin with the raw amino-acid sequence, 535 residues long: CTP synthase (535 aa).

The tract at residues 1 to 268 is amidoligase domain; the sequence is MSTKYIFVTG…DQIVCDHLKL (268 aa). Ser14 provides a ligand contact to CTP. Ser14 is a binding site for UTP. Residue 15 to 20 coordinates ATP; that stretch reads SMGKGI. Residue Tyr55 participates in L-glutamine binding. Asp72 contacts ATP. Positions 72 and 142 each coordinate Mg(2+). CTP-binding positions include 149 to 151, 189 to 194, and Lys225; these read DME and KTKIAQ. Residues 189 to 194 and Lys225 contribute to the UTP site; that span reads KTKIAQ. ATP is bound at residue Val243. The region spanning 293–535 is the Glutamine amidotransferase type-1 domain; the sequence is KIALVGKYVE…FIRVAVENSK (243 aa). An L-glutamine-binding site is contributed by Gly355. The Nucleophile; for glutamine hydrolysis role is filled by Cys382. Residues 383-386, Glu406, and Arg464 contribute to the L-glutamine site; that span reads LGMQ. Catalysis depends on residues His509 and Glu511.

This sequence belongs to the CTP synthase family. As to quaternary structure, homotetramer. In contrast to E.coli CTP synthase, remains a tetramer at dilute enzyme concentrations even in the absence of Mg(2+), ATP and UTP.

The catalysed reaction is UTP + L-glutamine + ATP + H2O = CTP + L-glutamate + ADP + phosphate + 2 H(+). The enzyme catalyses L-glutamine + H2O = L-glutamate + NH4(+). It carries out the reaction UTP + NH4(+) + ATP = CTP + ADP + phosphate + 2 H(+). It functions in the pathway pyrimidine metabolism; CTP biosynthesis via de novo pathway; CTP from UDP: step 2/2. Allosterically activated by GTP, when glutamine is the substrate. GTP has no effect on the reaction when ammonia is the substrate. The allosteric effector GTP functions by stabilizing the protein conformation that binds the tetrahedral intermediate(s) formed during glutamine hydrolysis. Also activated by magnesium. Allosterically inhibited by CTP. In terms of biological role, catalyzes the ATP-dependent amination of UTP to CTP with either L-glutamine or ammonia as the source of nitrogen. Is essential for the synthesis of CTP de novo. Contrary to other bacterial CTP synthases, the lactococcal enzyme is also able to convert dUTP to dCTP, but this reaction may not play a significant physiological role. Regulates intracellular CTP levels through interactions with the four ribonucleotide triphosphates. In Lactococcus lactis subsp. cremoris (strain MG1363), this protein is CTP synthase.